Reading from the N-terminus, the 396-residue chain is Potassium channel subfamily K member 9 (396 aa).

At 1-8 the chain is on the cytoplasmic side; it reads MKRQNVRT. The helical transmembrane segment at 9-29 threads the bilayer; that stretch reads LSLIACTFTYLLVGAAVFDAL. Topologically, residues 30–88 are extracellular; sequence ESDHEMREEEKLKAEEVRLRGKYNISSDDYQQLELVILQSEPHRAGVQWKFAGSFYFAI. Asparagine 53 carries an N-linked (GlcNAc...) asparagine glycan. The pore-forming intramembrane region spans 89 to 101; sequence TVITTIGYGHAAP. Residues threonine 93, isoleucine 94, glycine 95, and tyrosine 96 each coordinate K(+). A selectivity filter 1 region spans residues 93-98; that stretch reads TIGYGH. The Extracellular portion of the chain corresponds to 102–107; sequence GTDAGK. Residues 108–128 traverse the membrane as a helical segment; it reads AFCMFYAVLGIPLTLVMFQSL. The Cytoplasmic portion of the chain corresponds to 129-158; sequence GERMNTFVRYLLKRIKKCCGMRNTEVSMEN. A helical transmembrane segment spans residues 159 to 179; it reads MVTVGFFSCMGTLCLGAAAFS. Residues 180–194 are Extracellular-facing; that stretch reads QCEDWSFFHAYYYCF. Residues 195-207 constitute an intramembrane region (pore-forming); the sequence is ITLTTIGFGDFVA. K(+) contacts are provided by threonine 199, isoleucine 200, glycine 201, and phenylalanine 202. The selectivity filter 2 stretch occupies residues 199–204; that stretch reads TIGFGD. Topologically, residues 208–218 are extracellular; that stretch reads LQSKGALQRKP. The chain crosses the membrane as a helical span at residues 219-239; the sequence is FYVAFSFMYILVGLTVIGAFL. Residues 240–396 are Cytoplasmic-facing; that stretch reads NLVVLRFLTM…HRLHIRRKSI (157 aa). The interval 243-248 is X-gate; the sequence is VLRFLT.

Belongs to the two pore domain potassium channel (TC 1.A.1.8) family. Homodimer. Heterodimer with KCNK1. Heterodimer with KCNK3. As to expression, highly expressed in the CNS and at lower levels in the colon, kidney, liver, lung, spleen, stomach and skeletal muscle. The highest expression was found in the olfactory nuclei, piriform cortex, cerebellum, antedorsal thalmic nucleus, pontine nucleus, dorsal raphe and several nuclei in the medulla. Shows a non-homogeneous distribution in the hippocampus. Expressed at highest levels in the lateral posterior and inferior portions and at medium levels in neocortex. Expressed in motoneurons, including hypoglossal motoneurons (at protein level).

Its subcellular location is the cell membrane. The protein localises to the mitochondrion inner membrane. It is found in the cell projection. The protein resides in the dendrite. It carries out the reaction K(+)(in) = K(+)(out). It catalyses the reaction Na(+)(in) = Na(+)(out). Its activity is regulated as follows. Activated by halothane and isoflurane. Inhibited by external acidification, diacylglycerol, anandamide and AGT/angiotensin II. Ruthenium red inhibits homomeric but not KCNK3:KCNK9 heteromeric channels. Its function is as follows. K(+) channel that conducts voltage-dependent outward rectifying currents upon membrane depolarization. Voltage sensing is coupled to K(+) electrochemical gradient in an 'ion flux gating' mode where outward but not inward ion flow opens the gate. Changes ion selectivity and becomes permeable to Na(+) ions in response to extracellular acidification. Protonation of the pH sensor His-98 stabilizes C-type inactivation conformation likely converting the channel from outward K(+)-conducting, to inward Na(+)-conducting to nonconductive state. Homo- and heterodimerizes to form functional channels with distinct regulatory and gating properties. Allows K(+) currents with fast-gating kinetics important for the repolarization and hyperpolarization phases of action potentials. In granule neurons, hyperpolarizes the resting membrane potential to limit intrinsic neuronal excitability, but once the action potential threshold is reached, supports high-frequency action potential firing and increased neuronal excitability. Homomeric and/or heteromeric KCNK3:KCNK9 channels operate in cerebellar granule cells, whereas heteromeric KCNK1:KCNK9 enables currents in hippocampal dentate gyrus granule neurons. Dispensable for central chemosensory respiration i.e. breathing controlled by brainstem CO2/pH, it rather conducts pH-sensitive currents and controls the firing rate of serotonergic raphe neurons involved in potentiation of the respiratory chemoreflex. In retinal ganglion cells, mediates outward rectifying currents that regulate action potentials in response to acidification of the synaptic cleft. Involved in transmission of image-forming and nonimage-forming visual information in the retina. In adrenal gland, contributes to the maintenance of a hyperpolarized resting membrane potential of aldosterone-producing cells at zona glomerulosa and limits aldosterone release as part of a regulatory mechanism that controls arterial blood pressure and electrolyte homeostasis. This is Potassium channel subfamily K member 9 from Rattus norvegicus (Rat).